A 326-amino-acid chain; its full sequence is F-box/LRR-repeat protein 12 (326 aa).

An F-box domain is found at 1–47; sequence MATLFDLPDLVLLEIFSYLPVRDRIRISRVCHRWKRLVDDRWLWRHV. LRR repeat units lie at residues 51–78, 86–111, 113–133, 161–185, 186–211, 212–236, 237–261, and 266–291; these read LYTM…RMGG, APQL…CLHV, DLSM…ELHS, VPAF…VLGG, TYRV…EVLG, CTLS…IRLT, VGGL…CFQG, and PDMP…EVQG.

In terms of assembly, interacts with SKP1 and CUL1.

It participates in protein modification; protein ubiquitination. Functionally, substrate-recognition component of the SCF (SKP1-CUL1-F-box protein)-type E3 ubiquitin ligase complex. Mediates the polyubiquitination and proteasomal degradation of CAMK1 leading to disruption of cyclin D1/CDK4 complex assembly which results in G1 cell cycle arrest in lung epithelia. The protein is F-box/LRR-repeat protein 12 (Fbxl12) of Mus musculus (Mouse).